The following is an 80-amino-acid chain: Putative UPF0377 protein YMR324C (80 aa).

The chain crosses the membrane as a helical span at residues 13–33 (ACIFIDSVCEGIVFWGLCLFV).

It belongs to the UPF0377 family.

It localises to the membrane. The chain is Putative UPF0377 protein YMR324C from Saccharomyces cerevisiae (strain ATCC 204508 / S288c) (Baker's yeast).